We begin with the raw amino-acid sequence, 311 residues long: Porphobilinogen deaminase (311 aa).

S-(dipyrrolylmethanemethyl)cysteine is present on cysteine 241.

The protein belongs to the HMBS family. As to quaternary structure, monomer. It depends on dipyrromethane as a cofactor.

It catalyses the reaction 4 porphobilinogen + H2O = hydroxymethylbilane + 4 NH4(+). It participates in porphyrin-containing compound metabolism; protoporphyrin-IX biosynthesis; coproporphyrinogen-III from 5-aminolevulinate: step 2/4. Tetrapolymerization of the monopyrrole PBG into the hydroxymethylbilane pre-uroporphyrinogen in several discrete steps. This Shouchella clausii (strain KSM-K16) (Alkalihalobacillus clausii) protein is Porphobilinogen deaminase.